Reading from the N-terminus, the 70-residue chain is Large ribosomal subunit protein bL31 (70 aa).

Zn(2+)-binding residues include Cys-16, Cys-18, Cys-37, and Cys-40.

Belongs to the bacterial ribosomal protein bL31 family. Type A subfamily. Part of the 50S ribosomal subunit. The cofactor is Zn(2+).

Its function is as follows. Binds the 23S rRNA. The sequence is that of Large ribosomal subunit protein bL31 from Salmonella agona (strain SL483).